The sequence spans 295 residues: Pantothenate synthetase (295 aa).

His-37 acts as the Proton donor in catalysis. Gln-61 provides a ligand contact to (R)-pantoate. Gln-61 contributes to the beta-alanine binding site. 154–157 (GRKD) is an ATP binding site. Gln-160 provides a ligand contact to (R)-pantoate. ATP-binding positions include Val-183 and 191–194 (QSSR).

This sequence belongs to the pantothenate synthetase family. As to quaternary structure, homodimer.

The protein localises to the cytoplasm. It catalyses the reaction (R)-pantoate + beta-alanine + ATP = (R)-pantothenate + AMP + diphosphate + H(+). The protein operates within cofactor biosynthesis; (R)-pantothenate biosynthesis; (R)-pantothenate from (R)-pantoate and beta-alanine: step 1/1. Functionally, catalyzes the condensation of pantoate with beta-alanine in an ATP-dependent reaction via a pantoyl-adenylate intermediate. The polypeptide is Pantothenate synthetase (Salinibacter ruber (strain DSM 13855 / M31)).